A 206-amino-acid polypeptide reads, in one-letter code: Homoserine/homoserine lactone efflux protein (206 aa).

6 helical membrane-spanning segments follow: residues 5–25 (WWFAYLLTSTLLSLSPGSGAI), 45–65 (GLQTGLGIHIVLVGVGLGTLF), 68–88 (SLLAFEILKWAGAAYLIWLGI), 117–137 (FVNLTNPKSIVFLAALFPQFI), 148–168 (LILGVTTIVVDMVVMTGYATL), and 182–202 (MKALNKAFGSLFMLVGALLAS).

The protein belongs to the Rht family.

Its subcellular location is the cell membrane. In terms of biological role, conducts the efflux of homoserine and homoserine lactone. The sequence is that of Homoserine/homoserine lactone efflux protein (rhtB) from Salmonella typhimurium (strain LT2 / SGSC1412 / ATCC 700720).